Consider the following 434-residue polypeptide: Putative nuclease OPG089 (434 aa).

Asp33, Asp74, Glu168, Asp170, Asp196, and Asp198 together coordinate Mg(2+).

It belongs to the XPG/RAD2 endonuclease family. FEN1 subfamily. The cofactor is Mg(2+).

The protein localises to the virion. Putative nuclease that seems to be required for double-strand break repair, homologous recombination, and production of full-length viral genomic DNA. This Homo sapiens (Human) protein is Putative nuclease OPG089 (OPG089).